Here is a 76-residue protein sequence, read N- to C-terminus: U1-cyrtautoxin-As1b (76 aa).

4 cysteine pairs are disulfide-bonded: cysteine 23-cysteine 37, cysteine 30-cysteine 51, cysteine 36-cysteine 66, and cysteine 69-cysteine 76.

Belongs to the neurotoxin 21 family. As to expression, expressed by the venom gland.

The protein localises to the secreted. In terms of biological role, neurotoxin with probable ion channel impairing activity. Is both paralytic and lethal, when injected into lepidopteran larvae. The polypeptide is U1-cyrtautoxin-As1b (Apomastus schlingeri (Trap-door spider)).